We begin with the raw amino-acid sequence, 561 residues long: Mesoderm induction early response protein 2 (561 aa).

Disordered stretches follow at residues 1-28 (MAEA…GEPN) and 52-188 (QNYG…EDPL). Residue Ser-11 is modified to Phosphoserine. Over residues 140-165 (QSSADDLTPSVTSHEASDLFPSQSGS) the composition is skewed to polar residues. An ELM2 domain is found at 195–292 (KEIMVGPQFQ…EALRRLRFNV (98 aa)). In terms of domain architecture, SANT spans 297–349 (DGLCAWSEEERRNFEHGFRVHGKNFHLIQANKVRTRSVGECVEYYYLWKKSER). A disordered region spans residues 360 to 515 (GRRKYGPSGN…DGEPEETVGP (156 aa)). The span at 417 to 428 (LSMGSSMSRSLG) shows a compositional bias: low complexity. Over residues 439–451 (SSEPGPRLFPPLD) the composition is skewed to pro residues. Residues 453–482 (PSALPSSRRPPALAEPAFFPPATAAPEPGA) are compositionally biased toward low complexity.

Part of a complex containing at least CDYL, MIER1, MIER2, HDAC1 and HDAC2.

The protein localises to the nucleus. In terms of biological role, transcriptional repressor. The protein is Mesoderm induction early response protein 2 (MIER2) of Bos taurus (Bovine).